The primary structure comprises 88 residues: Putative membrane protein insertion efficiency factor (88 aa).

This sequence belongs to the UPF0161 family.

The protein resides in the cell inner membrane. Functionally, could be involved in insertion of integral membrane proteins into the membrane. In Synechococcus sp. (strain CC9311), this protein is Putative membrane protein insertion efficiency factor.